Here is a 267-residue protein sequence, read N- to C-terminus: Apolipoprotein A-I (267 aa).

The first 18 residues, 1-18, serve as a signal peptide directing secretion; that stretch reads MKAAVLTLAVLFLTGSQA. Tandem repeats lie at residues 68–89 and 90–111. The 10 X approximate tandem repeats stretch occupies residues 68-267; the sequence is LKLLDNWDSM…EEYTKKLNTQ (200 aa). M110 is modified (methionine sulfoxide). The stretch at 112–122 is one 3; half-length repeat; that stretch reads KDLEEVKAKVQ. 5 repeat units span residues 123–144, 145–166, 167–188, 189–210, and 211–232. M136 bears the Methionine sulfoxide mark. Residues 233–243 form a 9; half-length repeat; that stretch reads PALEDLRQGLL. Copy 10 of the repeat occupies 244-267; the sequence is PVLESFKVSFLSALEEYTKKLNTQ.

It belongs to the apolipoprotein A1/A4/E family. In terms of assembly, homodimer. Interacts with APOA1BP and CLU. Component of a sperm activating protein complex (SPAP), consisting of APOA1, an immunoglobulin heavy chain, an immunoglobulin light chain and albumin. Interacts with NDRG1. Interacts with SCGB3A2. Interacts with NAXE and YJEFN3. Glycosylated. Post-translationally, palmitoylated. Major protein of plasma HDL, also found in chylomicrons.

Its subcellular location is the secreted. Functionally, participates in the reverse transport of cholesterol from tissues to the liver for excretion by promoting cholesterol efflux from tissues and by acting as a cofactor for the lecithin cholesterol acyltransferase (LCAT). As part of the SPAP complex, activates spermatozoa motility. The polypeptide is Apolipoprotein A-I (APOA1) (Pongo abelii (Sumatran orangutan)).